The following is a 257-amino-acid chain: Deoxyribose-phosphate aldolase (257 aa).

Asp-102 functions as the Proton donor/acceptor in the catalytic mechanism. Lys-165 (schiff-base intermediate with acetaldehyde) is an active-site residue. Lys-199 acts as the Proton donor/acceptor in catalysis.

The protein belongs to the DeoC/FbaB aldolase family. DeoC type 2 subfamily.

The protein resides in the cytoplasm. It carries out the reaction 2-deoxy-D-ribose 5-phosphate = D-glyceraldehyde 3-phosphate + acetaldehyde. The protein operates within carbohydrate degradation; 2-deoxy-D-ribose 1-phosphate degradation; D-glyceraldehyde 3-phosphate and acetaldehyde from 2-deoxy-alpha-D-ribose 1-phosphate: step 2/2. Functionally, catalyzes a reversible aldol reaction between acetaldehyde and D-glyceraldehyde 3-phosphate to generate 2-deoxy-D-ribose 5-phosphate. The chain is Deoxyribose-phosphate aldolase from Photobacterium profundum (strain SS9).